A 471-amino-acid polypeptide reads, in one-letter code: Vitellogenic carboxypeptidase (471 aa).

The N-terminal stretch at 1-19 (MVKFHLLVLIAFTCYTCSD) is a signal peptide. N-linked (GlcNAc...) asparagine glycosylation occurs at Asn-135. Active-site residues include Ser-207, Asp-391, and His-448.

The protein belongs to the peptidase S10 family. In terms of tissue distribution, synthesized in the fat body of vitellogenic females, secreted into the hemolymph and accumulates in yolk bodies of developing oocytes.

It is found in the secreted. Its function is as follows. May play a role in activating hydrolytic enzymes that are involved in the degradation of yolk proteins in developing embryos or may function as an exopeptidase in the degradation of vitellogenin. The protein is Vitellogenic carboxypeptidase (VCP) of Aedes aegypti (Yellowfever mosquito).